The following is a 186-amino-acid chain: MKKTVLALMFSCGMVASAFAHNHAVEHKHTGEMLEVKVELLDPAKGNQEIGKVVITESAYGLVFTPELKNLTAGLHGFHIHQNPSCDAKEKDGKLVAGLAAGGHWDPKNAGKHGYPWSDDAHLGDLPALAVNQDGTANNPVLAPRLKHLDDVKGRSLMIHEGGDNHDDHPAPLGGGGPRMACGVIK.

The signal sequence occupies residues 1–20 (MKKTVLALMFSCGMVASAFA). Residues histidine 79, histidine 81, and histidine 104 each coordinate Cu cation. The cysteines at positions 86 and 182 are disulfide-linked. The Zn(2+) site is built by histidine 104, histidine 113, histidine 122, and aspartate 125. Residue histidine 160 coordinates Cu cation.

This sequence belongs to the Cu-Zn superoxide dismutase family. In terms of assembly, homodimer. The cofactor is Cu cation. Zn(2+) is required as a cofactor.

Its subcellular location is the periplasm. The enzyme catalyses 2 superoxide + 2 H(+) = H2O2 + O2. In terms of biological role, destroys radicals which are normally produced within the cells and which are toxic to biological systems. This Pasteurella multocida (strain Pm70) protein is Superoxide dismutase [Cu-Zn] (sodC).